The following is a 614-amino-acid chain: Zinc finger and SCAN domain-containing protein 2 (614 aa).

3 disordered regions span residues 1 to 25 (MAAEVPAVSTPLSPLVQVPQEEDEQ), 42 to 73 (AVLQEDGPESEPFPQSAGKGSPQEEDAAEGPQ), and 162 to 200 (NISGGEGGQQSDGDSDFERDCGSGGAQGHAPGEDPRVVP). The 59-residue stretch at 69–127 (AEGPQGALVRFRELCRRWLRPEVHTKEQMLTVLPREIQAWLQEHRPESSEEAVALVEDL) folds into the SCAN box domain. 14 C2H2-type zinc fingers span residues 222–244 (YECPQCGKTFSRKSHLITHERTH), 250–272 (YKCDECGKSFSDGSNFSRHQTTH), 278–300 (YKCRDCGKSFSRSANLITHQRIH), 306–328 (FQCAECGKSFSRSPNLIAHQRTH), 334–356 (YSCPECGKSFGNRSSLNTHQGIH), 362–384 (YACKECGESFSYNSNLIRHQRIH), 390–412 (YKCTECGQKFSQSSALITHRRTH), 418–440 (YQCGECGKNFSRSSNLATHRRTH), 446–468 (YKCGLCGKSFSQSSSLIAHQGTH), 474–496 (YECLTCGESFSWSSNLIKHQRTH), 502–524 (YRCGDCGKGFSQRSQLVVHQRTH), 530–552 (YKCLMCGKSFSRGSILVMHQRAH), 558–580 (YRCPECGKGFSWNSVLIIHQRIH), and 586–608 (YRCPECGKGFSNSSNFITHQRTH).

The protein belongs to the krueppel C2H2-type zinc-finger protein family. In terms of tissue distribution, in the adult, predominantly found in spermatids. Also present in the embryo.

It localises to the nucleus. In terms of biological role, may be involved in transcriptional regulation during the post-meiotic stages of spermatogenesis. The chain is Zinc finger and SCAN domain-containing protein 2 (Zscan2) from Mus musculus (Mouse).